A 182-amino-acid polypeptide reads, in one-letter code: NADH-ubiquinone oxidoreductase 20 kDa subunit (182 aa).

Positions 57, 58, 122, and 152 each coordinate [4Fe-4S] cluster.

The protein belongs to the complex I 20 kDa subunit family. It depends on [4Fe-4S] cluster as a cofactor.

The protein localises to the mitochondrion. It carries out the reaction a ubiquinone + NADH + 5 H(+)(in) = a ubiquinol + NAD(+) + 4 H(+)(out). This chain is NADH-ubiquinone oxidoreductase 20 kDa subunit (NAD10), found in Reclinomonas americana.